Here is a 463-residue protein sequence, read N- to C-terminus: ATP-dependent protease ATPase subunit HslU (463 aa).

ATP is bound by residues Ile19 and 61-66 (GVGKTE). A disordered region spans residues 154 to 174 (FGGAQNSSQTSDTQEDGEIEK). ATP is bound by residues Asp277, Glu341, and Arg413.

The protein belongs to the ClpX chaperone family. HslU subfamily. As to quaternary structure, a double ring-shaped homohexamer of HslV is capped on each side by a ring-shaped HslU homohexamer. The assembly of the HslU/HslV complex is dependent on binding of ATP.

The protein resides in the cytoplasm. ATPase subunit of a proteasome-like degradation complex; this subunit has chaperone activity. The binding of ATP and its subsequent hydrolysis by HslU are essential for unfolding of protein substrates subsequently hydrolyzed by HslV. HslU recognizes the N-terminal part of its protein substrates and unfolds these before they are guided to HslV for hydrolysis. The polypeptide is ATP-dependent protease ATPase subunit HslU (Bacillus cereus (strain G9842)).